Here is a 223-residue protein sequence, read N- to C-terminus: Charged multivesicular body protein 3 (223 aa).

Residue Gly2 is the site of N-myristoyl glycine attachment. Positions 2 to 113 (GLFGKTQEKP…LQKSTEVMKA (112 aa)) are intramolecular interaction with C-terminus. The stretch at 22-54 (KIRKEMRVVDRQIRDIQREEEKVKRSVKDAAKK) forms a coiled coil. Important for autoinhibitory function regions lie at residues 59-64 (VCVVLA) and 168-169 (IL). Residues 149 to 223 (ESMDDQEEME…MQSRLATLRS (75 aa)) are a coiled coil. The segment at 151 to 221 (MDDQEEMEEA…EAMQSRLATL (71 aa)) is intramolecular interaction with N-terminus. The segment at 151–223 (MDDQEEMEEA…MQSRLATLRS (73 aa)) is interaction with VPS4A. Residue Lys179 forms a Glycyl lysine isopeptide (Lys-Gly) (interchain with G-Cter in ubiquitin) linkage. The disordered stretch occupies residues 180-223 (APSKVTDALPEPEPAGAMAASEGDEEDDEEDLEAMQSRLATLRS). 3 interaction with STAMBP regions span residues 196–223 (AMAA…TLRS), 204–208 (EEDDE), and 222–223 (RS). Residue Ser200 is modified to Phosphoserine. An MIT-interacting motif motif is present at residues 201–212 (EGDEEDDEEDLE). The span at 201–212 (EGDEEDDEEDLE) shows a compositional bias: acidic residues.

Belongs to the SNF7 family. In terms of assembly, probable core component of the endosomal sorting required for transport complex III (ESCRT-III). ESCRT-III components are thought to multimerize to form a flat lattice on the perimeter membrane of the endosome. Several assembly forms of ESCRT-III may exist that interact and act sequentially. Forms a metastable monomer in solution; its core structure (without part of the putative autoinhibitory C-terminal acidic region) oligomerizes into a flat lattice via two different dimerization interfaces. In vitro, heteromerizes with CHMP2A (but not CHMP4) to form helical tubular structures that expose membrane-interacting sites on the outside whereas VPS4B can associate on the inside of the tubule. May interact with IGFBP7; the relevance of such interaction however remains unclear. Interacts with CHMP2A. Interacts with CHMP4A; the interaction requires the release of CHMP4A autoinhibition. Interacts with VPS4A. Interacts with STAMBP; the interaction appears to relieve the autoinhibition of CHMP3. Interacts with VTA1.

It localises to the cytoplasm. Its subcellular location is the cytosol. The protein localises to the membrane. The protein resides in the endosome. It is found in the late endosome membrane. Functionally, probable core component of the endosomal sorting required for transport complex III (ESCRT-III) which is involved in multivesicular bodies (MVBs) formation and sorting of endosomal cargo proteins into MVBs. MVBs contain intraluminal vesicles (ILVs) that are generated by invagination and scission from the limiting membrane of the endosome and mostly are delivered to lysosomes enabling degradation of membrane proteins, such as stimulated growth factor receptors, lysosomal enzymes and lipids. The MVB pathway appears to require the sequential function of ESCRT-O, -I,-II and -III complexes. ESCRT-III proteins mostly dissociate from the invaginating membrane before the ILV is released. The ESCRT machinery also functions in topologically equivalent membrane fission events, such as the terminal stages of cytokinesis. ESCRT-III proteins are believed to mediate the necessary vesicle extrusion and/or membrane fission activities, possibly in conjunction with the AAA ATPase VPS4. Selectively binds to phosphatidylinositol 3,5-bisphosphate PtdIns(3,5)P2 and PtdIns(3,4)P2 in preference to other phosphoinositides tested. Involved in late stages of cytokinesis. Plays a role in endosomal sorting/trafficking of EGF receptor. The protein is Charged multivesicular body protein 3 (Chmp3) of Rattus norvegicus (Rat).